A 572-amino-acid chain; its full sequence is Urease subunit alpha (572 aa).

One can recognise a Urease domain in the interval Ala134–Gly572. 3 residues coordinate Ni(2+): His139, His141, and Lys222. Lys222 is subject to N6-carboxylysine. Substrate is bound at residue His224. Ni(2+) contacts are provided by His251 and His277. Residue His325 is the Proton donor of the active site. Asp365 lines the Ni(2+) pocket.

Belongs to the metallo-dependent hydrolases superfamily. Urease alpha subunit family. As to quaternary structure, heterotrimer of UreA (gamma), UreB (beta) and UreC (alpha) subunits. Three heterotrimers associate to form the active enzyme. It depends on Ni cation as a cofactor. Post-translationally, carboxylation allows a single lysine to coordinate two nickel ions.

It is found in the cytoplasm. It catalyses the reaction urea + 2 H2O + H(+) = hydrogencarbonate + 2 NH4(+). The protein operates within nitrogen metabolism; urea degradation; CO(2) and NH(3) from urea (urease route): step 1/1. In Yersinia pseudotuberculosis serotype O:1b (strain IP 31758), this protein is Urease subunit alpha.